Reading from the N-terminus, the 391-residue chain is Zinc finger protein 414 (391 aa).

The segment at 1–110 (MDEEPSGPSL…RRPPPGKQIP (110 aa)) is disordered. Over residues 84–93 (GPTSTVSGTS) the composition is skewed to polar residues. 3 consecutive C2H2-type zinc fingers follow at residues 109–133 (IPCSSPGCCLSFPSVRDLAQHLRTH), 145–169 (FRCSALSCTETFPNMQELVAHGKLH), and 176–201 (FKCENCLLRIRTHRSLFKHLHVCAEH). Disordered stretches follow at residues 201 to 243 (HAQS…LEPF), 274 to 312 (LAAAPGPPASSAAVWKKSQGAGGSPRRPQGGSDAPSGHA), and 344 to 391 (HLED…FSPL). The span at 214-226 (LDRESPASERPPE) shows a compositional bias: basic and acidic residues. Residues 227-236 (SDPAPAPGLP) show a composition bias toward pro residues. Residues 274–286 (LAAAPGPPASSAA) are compositionally biased toward low complexity. The C2H2-type 4 zinc-finger motif lies at 326-348 (YSCMQCAFSTASRPAMTLHLEDH). The segment covering 353 to 372 (PAAPAPGQPRPDAPADPAPL) has biased composition (pro residues).

Belongs to the krueppel C2H2-type zinc-finger protein family.

The protein resides in the nucleus. In terms of biological role, may be involved in transcriptional regulation. The polypeptide is Zinc finger protein 414 (ZNF414) (Bos taurus (Bovine)).